A 243-amino-acid polypeptide reads, in one-letter code: UPF0758 protein alr2351 (243 aa).

Positions 113 to 235 (PIDSPVAAVA…HQSLREITTL (123 aa)) constitute an MPN domain. Zn(2+) contacts are provided by His184, His186, and Asp197. A JAMM motif motif is present at residues 184–197 (HNHPSGNVEPSPED).

It belongs to the UPF0758 family.

The chain is UPF0758 protein alr2351 from Nostoc sp. (strain PCC 7120 / SAG 25.82 / UTEX 2576).